The sequence spans 179 residues: Large ribosomal subunit protein uL6 (179 aa).

The protein belongs to the universal ribosomal protein uL6 family. In terms of assembly, part of the 50S ribosomal subunit.

In terms of biological role, this protein binds to the 23S rRNA, and is important in its secondary structure. It is located near the subunit interface in the base of the L7/L12 stalk, and near the tRNA binding site of the peptidyltransferase center. This Bacillus anthracis protein is Large ribosomal subunit protein uL6.